The primary structure comprises 380 residues: Cytochrome b (380 aa).

4 helical membrane-spanning segments follow: residues 33 to 53 (FGSLLGLCLAAQILTGLFLAM), 77 to 98 (WLIRSMHANGASFFFICIYLHI), 113 to 133 (WNIGVILLLLVMMTAFVGYVL), and 178 to 198 (FFAFHFLFPFVIAAMTMIHLI). The heme b site is built by His83 and His97. Residues His182 and His196 each contribute to the heme b site. His201 contacts a ubiquinone. 4 helical membrane passes run 226–246 (YKDLLGFAILLIALITLALFS), 288–308 (LGGVLALLFSILILMLVPVLH), 320–340 (FSQFLFWLLVANVAILTWIGG), and 347–367 (FIIIGQIASFLYFFIFLILVP).

This sequence belongs to the cytochrome b family. In terms of assembly, the cytochrome bc1 complex contains 3 respiratory subunits (MT-CYB, CYC1 and UQCRFS1), 2 core proteins (UQCRC1 and UQCRC2) and probably 6 low-molecular weight proteins. Requires heme b as cofactor.

It is found in the mitochondrion inner membrane. Component of the ubiquinol-cytochrome c reductase complex (complex III or cytochrome b-c1 complex) that is part of the mitochondrial respiratory chain. The b-c1 complex mediates electron transfer from ubiquinol to cytochrome c. Contributes to the generation of a proton gradient across the mitochondrial membrane that is then used for ATP synthesis. The protein is Cytochrome b (mt-cyb) of Astronotus ocellatus (Oscar).